Here is a 113-residue protein sequence, read N- to C-terminus: Hydrogenase maturation factor HybF (113 aa).

Positions 2 and 3 each coordinate Ni(2+). 4 residues coordinate Zn(2+): Cys-73, Cys-76, Cys-89, and Cys-92.

This sequence belongs to the HypA/HybF family. HybF subfamily. Monomer.

Functionally, involved in the maturation of [NiFe] hydrogenases. Required for nickel insertion into the metal center of the hydrogenase. HybF is involved in maturation of hydrogenases 1 and 2. It may partially substitute for the function of HypA and vice versa. The polypeptide is Hydrogenase maturation factor HybF (Escherichia coli (strain K12)).